Consider the following 367-residue polypeptide: Probable butyrate kinase (367 aa).

This sequence belongs to the acetokinase family.

The protein localises to the cytoplasm. The enzyme catalyses butanoate + ATP = butanoyl phosphate + ADP. This Bacillus cereus (strain G9842) protein is Probable butyrate kinase.